The primary structure comprises 1430 residues: Gag-Pol polyprotein (1430 aa).

Gly2 is lipidated: N-myristoyl glycine; by host. The tract at residues 7–31 (VLSGGKLDAWEKIRLRPGGKKKYKL) is interaction with Gp41. The segment at 8 to 43 (LSGGKLDAWEKIRLRPGGKKKYKLKHLVWASRELER) is interaction with host CALM1. Residues 12-19 (KLDAWEKI) form an interaction with host AP3D1 region. Residues 14–33 (DAWEKIRLRPGGKKKYKLKH) form an interaction with membrane phosphatidylinositol 4,5-bisphosphate and RNA region. A Nuclear export signal motif is present at residues 16 to 22 (WEKIRLR). Residues 26 to 32 (KKKYKLK) carry the Nuclear localization signal motif. Positions 73 to 77 (EEIKS) are interaction with membrane phosphatidylinositol 4,5-bisphosphate. Phosphotyrosine; by host is present on Tyr128. An interaction with human PPIA/CYPA and NUP153 region spans residues 185-223 (NTVGGHQAAMQMLKDTINDEAAEWDRLHPVHAGPIPPGQ). Residues 273–359 (YSPVSILDIR…GGPSHKARIL (87 aa)) are dimerization/Multimerization of capsid protein p24. CCHC-type zinc fingers lie at residues 385-402 (VKCF…NCRA) and 406-423 (KGCW…DCTE). Residues 439 to 480 (EAREFSSEQTRANSPTSRELRVRGGDNPLSEAGDQRQGTEPS) are disordered. Positions 445 to 455 (SEQTRANSPTS) are enriched in polar residues. Residues 484-488 (PQITL) are dimerization of protease. The Peptidase A2 domain maps to 503-572 (REALLDTGAD…TPVNIIGRNL (70 aa)). The active-site For protease activity; shared with dimeric partner is the Asp508. Dimerization of protease regions lie at residues 532–538 (GIGGFIK) and 571–583 (NLLT…LNFP). The Reverse transcriptase domain maps to 626-816 (EGKISKIGPE…PPFLWMGYEL (191 aa)). Residues Asp692, Asp767, and Asp768 each coordinate Mg(2+). Residues 809-817 (FLWMGYELH) form an RT 'primer grip' region. The Tryptophan repeat motif signature appears at 980–996 (WETWWTEYWQATWIPEW). One can recognise an RNase H type-1 domain in the interval 1016-1139 (IVGAETFYVD…VDKLVSAGIR (124 aa)). Asp1025, Glu1060, Asp1080, and Asp1131 together coordinate Mg(2+). Residues 1145-1186 (DGIDKAQEEHEKYHNNWRAMASDFNLPPIVAKEIVASCDKCQ) form an Integrase-type zinc finger. Zn(2+) contacts are provided by His1154, His1158, Cys1182, and Cys1185. Residues 1196-1346 (VDCSPGIWQL…SAGERIVDII (151 aa)) form the Integrase catalytic domain. Positions 1206, 1258, and 1294 each coordinate Mg(2+). A DNA-binding region (integrase-type) is located at residues 1365–1412 (FRVYYRDSREPIWKGPAKLLWKGEGAVVIQDNSEIKVVPRRKAKIIRD).

Homotrimer; further assembles as hexamers of trimers. Interacts with gp41 (via C-terminus). Interacts with host CALM1; this interaction induces a conformational change in the Matrix protein, triggering exposure of the myristate group. Interacts with host AP3D1; this interaction allows the polyprotein trafficking to multivesicular bodies during virus assembly. Part of the pre-integration complex (PIC) which is composed of viral genome, matrix protein, Vpr and integrase. In terms of assembly, homodimer; the homodimer further multimerizes as homohexamers or homopentamers. Interacts with human PPIA/CYPA; This interaction stabilizes the capsid. Interacts with human NUP153. Interacts with host PDZD8; this interaction stabilizes the capsid. Interacts with monkey TRIM5; this interaction destabilizes the capsid. As to quaternary structure, homodimer, whose active site consists of two apposed aspartic acid residues. Heterodimer of p66 RT and p51 RT (RT p66/p51). Heterodimerization of RT is essential for DNA polymerase activity. The overall folding of the subdomains is similar in p66 RT and p51 RT but the spatial arrangements of the subdomains are dramatically different. In terms of assembly, homotetramer; may further associate as a homohexadecamer. Part of the pre-integration complex (PIC) which is composed of viral genome, matrix protein, Vpr and integrase. Interacts with human SMARCB1/INI1 and human PSIP1/LEDGF isoform 1. Interacts with human KPNA3; this interaction might play a role in nuclear import of the pre-integration complex. Interacts with human NUP153; this interaction might play a role in nuclear import of the pre-integration complex. Mg(2+) is required as a cofactor. Post-translationally, specific enzymatic cleavages by the viral protease yield mature proteins. The protease is released by autocatalytic cleavage. The polyprotein is cleaved during and after budding, this process is termed maturation. Proteolytic cleavage of p66 RT removes the RNase H domain to yield the p51 RT subunit. Nucleocapsid protein p7 might be further cleaved after virus entry. In terms of processing, tyrosine phosphorylated presumably in the virion by a host kinase. Phosphorylation is apparently not a major regulator of membrane association. Phosphorylated possibly by host MAPK1; this phosphorylation is necessary for Pin1-mediated virion uncoating. Post-translationally, methylated by host PRMT6, impairing its function by reducing RNA annealing and the initiation of reverse transcription.

It is found in the host cell membrane. The protein localises to the host endosome. The protein resides in the host multivesicular body. It localises to the virion membrane. Its subcellular location is the host nucleus. It is found in the host cytoplasm. The protein localises to the virion. It catalyses the reaction Specific for a P1 residue that is hydrophobic, and P1' variable, but often Pro.. The enzyme catalyses Endohydrolysis of RNA in RNA/DNA hybrids. Three different cleavage modes: 1. sequence-specific internal cleavage of RNA. Human immunodeficiency virus type 1 and Moloney murine leukemia virus enzymes prefer to cleave the RNA strand one nucleotide away from the RNA-DNA junction. 2. RNA 5'-end directed cleavage 13-19 nucleotides from the RNA end. 3. DNA 3'-end directed cleavage 15-20 nucleotides away from the primer terminus.. The catalysed reaction is 3'-end directed exonucleolytic cleavage of viral RNA-DNA hybrid.. It carries out the reaction DNA(n) + a 2'-deoxyribonucleoside 5'-triphosphate = DNA(n+1) + diphosphate. Its activity is regulated as follows. Protease: The viral protease is inhibited by many synthetic protease inhibitors (PIs), such as amprenavir, atazanavir, indinavir, loprinavir, nelfinavir, ritonavir and saquinavir. Use of protease inhibitors in tritherapy regimens permit more ambitious therapeutic strategies. Reverse transcriptase/ribonuclease H: RT can be inhibited either by nucleoside RT inhibitors (NRTIs) or by non nucleoside RT inhibitors (NNRTIs). NRTIs act as chain terminators, whereas NNRTIs inhibit DNA polymerization by binding a small hydrophobic pocket near the RT active site and inducing an allosteric change in this region. Classical NRTIs are abacavir, adefovir (PMEA), didanosine (ddI), lamivudine (3TC), stavudine (d4T), tenofovir (PMPA), zalcitabine (ddC), and zidovudine (AZT). Classical NNRTIs are atevirdine (BHAP U-87201E), delavirdine, efavirenz (DMP-266), emivirine (I-EBU), and nevirapine (BI-RG-587). The tritherapies used as a basic effective treatment of AIDS associate two NRTIs and one NNRTI. Its function is as follows. Mediates, with Gag polyprotein, the essential events in virion assembly, including binding the plasma membrane, making the protein-protein interactions necessary to create spherical particles, recruiting the viral Env proteins, and packaging the genomic RNA via direct interactions with the RNA packaging sequence (Psi). Gag-Pol polyprotein may regulate its own translation, by the binding genomic RNA in the 5'-UTR. At low concentration, the polyprotein would promote translation, whereas at high concentration, the polyprotein would encapsidate genomic RNA and then shut off translation. Functionally, targets the polyprotein to the plasma membrane via a multipartite membrane-binding signal, that includes its myristoylated N-terminus. Matrix protein is part of the pre-integration complex. Implicated in the release from host cell mediated by Vpu. Binds to RNA. In terms of biological role, forms the conical core that encapsulates the genomic RNA-nucleocapsid complex in the virion. Most core are conical, with only 7% tubular. The core is constituted by capsid protein hexamer subunits. The core is disassembled soon after virion entry. Host restriction factors such as TRIM5-alpha or TRIMCyp bind retroviral capsids and cause premature capsid disassembly, leading to blocks in reverse transcription. Capsid restriction by TRIM5 is one of the factors which restricts HIV-1 to the human species. Host PIN1 apparently facilitates the virion uncoating. On the other hand, interactions with PDZD8 or CYPA stabilize the capsid. Encapsulates and protects viral dimeric unspliced genomic RNA (gRNA). Binds these RNAs through its zinc fingers. Acts as a nucleic acid chaperone which is involved in rearangement of nucleic acid secondary structure during gRNA retrotranscription. Also facilitates template switch leading to recombination. As part of the polyprotein, participates in gRNA dimerization, packaging, tRNA incorporation and virion assembly. Its function is as follows. Aspartyl protease that mediates proteolytic cleavages of Gag and Gag-Pol polyproteins during or shortly after the release of the virion from the plasma membrane. Cleavages take place as an ordered, step-wise cascade to yield mature proteins. This process is called maturation. Displays maximal activity during the budding process just prior to particle release from the cell. Also cleaves Nef and Vif, probably concomitantly with viral structural proteins on maturation of virus particles. Hydrolyzes host EIF4GI and PABP1 in order to shut off the capped cellular mRNA translation. The resulting inhibition of cellular protein synthesis serves to ensure maximal viral gene expression and to evade host immune response. Also mediates cleavage of host YTHDF3. Mediates cleavage of host CARD8, thereby activating the CARD8 inflammasome, leading to the clearance of latent HIV-1 in patient CD4(+) T-cells after viral reactivation; in contrast, HIV-1 can evade CARD8-sensing when its protease remains inactive in infected cells prior to viral budding. Functionally, multifunctional enzyme that converts the viral RNA genome into dsDNA in the cytoplasm, shortly after virus entry into the cell. This enzyme displays a DNA polymerase activity that can copy either DNA or RNA templates, and a ribonuclease H (RNase H) activity that cleaves the RNA strand of RNA-DNA heteroduplexes in a partially processive 3' to 5' endonucleasic mode. Conversion of viral genomic RNA into dsDNA requires many steps. A tRNA(3)-Lys binds to the primer-binding site (PBS) situated at the 5'-end of the viral RNA. RT uses the 3' end of the tRNA primer to perform a short round of RNA-dependent minus-strand DNA synthesis. The reading proceeds through the U5 region and ends after the repeated (R) region which is present at both ends of viral RNA. The portion of the RNA-DNA heteroduplex is digested by the RNase H, resulting in a ssDNA product attached to the tRNA primer. This ssDNA/tRNA hybridizes with the identical R region situated at the 3' end of viral RNA. This template exchange, known as minus-strand DNA strong stop transfer, can be either intra- or intermolecular. RT uses the 3' end of this newly synthesized short ssDNA to perform the RNA-dependent minus-strand DNA synthesis of the whole template. RNase H digests the RNA template except for two polypurine tracts (PPTs) situated at the 5'-end and near the center of the genome. It is not clear if both polymerase and RNase H activities are simultaneous. RNase H probably can proceed both in a polymerase-dependent (RNA cut into small fragments by the same RT performing DNA synthesis) and a polymerase-independent mode (cleavage of remaining RNA fragments by free RTs). Secondly, RT performs DNA-directed plus-strand DNA synthesis using the PPTs that have not been removed by RNase H as primers. PPTs and tRNA primers are then removed by RNase H. The 3' and 5' ssDNA PBS regions hybridize to form a circular dsDNA intermediate. Strand displacement synthesis by RT to the PBS and PPT ends produces a blunt ended, linear dsDNA copy of the viral genome that includes long terminal repeats (LTRs) at both ends. In terms of biological role, catalyzes viral DNA integration into the host chromosome, by performing a series of DNA cutting and joining reactions. This enzyme activity takes place after virion entry into a cell and reverse transcription of the RNA genome in dsDNA. The first step in the integration process is 3' processing. This step requires a complex comprising the viral genome, matrix protein, Vpr and integrase. This complex is called the pre-integration complex (PIC). The integrase protein removes 2 nucleotides from each 3' end of the viral DNA, leaving recessed CA OH's at the 3' ends. In the second step, the PIC enters cell nucleus. This process is mediated through integrase and Vpr proteins, and allows the virus to infect a non dividing cell. This ability to enter the nucleus is specific of lentiviruses, other retroviruses cannot and rely on cell division to access cell chromosomes. In the third step, termed strand transfer, the integrase protein joins the previously processed 3' ends to the 5' ends of strands of target cellular DNA at the site of integration. The 5'-ends are produced by integrase-catalyzed staggered cuts, 5 bp apart. A Y-shaped, gapped, recombination intermediate results, with the 5'-ends of the viral DNA strands and the 3' ends of target DNA strands remaining unjoined, flanking a gap of 5 bp. The last step is viral DNA integration into host chromosome. This involves host DNA repair synthesis in which the 5 bp gaps between the unjoined strands are filled in and then ligated. Since this process occurs at both cuts flanking the HIV genome, a 5 bp duplication of host DNA is produced at the ends of HIV-1 integration. Alternatively, Integrase may catalyze the excision of viral DNA just after strand transfer, this is termed disintegration. The polypeptide is Gag-Pol polyprotein (gag-pol) (Homo sapiens (Human)).